Consider the following 2372-residue polypeptide: NBAS subunit of NRZ tethering complex (2372 aa).

2 WD repeats span residues 119-158 (DPNP…LFII) and 304-343 (GEQD…LRGS). Residues 447 to 468 (LESSVKGEEDDGDDDSDSDEEA) are disordered. The span at 454–467 (EEDDGDDDSDSDEE) shows a compositional bias: acidic residues. Residues 629 to 668 (YEDFLSMEEELEQRKERESKKRQELLKKVDFSKLTLEQKE) are a coiled coil.

The protein localises to the endoplasmic reticulum. In terms of biological role, involved in Golgi-to-endoplasmic reticulum (ER) retrograde transport; the function is proposed to depend on its association in the NRZ complex which is believed to play a role in SNARE assembly at the ER. Required for normal embryonic development. May play a role in the nonsense-mediated decay pathway of mRNAs containing premature stop codons. The protein is NBAS subunit of NRZ tethering complex of Danio rerio (Zebrafish).